Here is a 399-residue protein sequence, read N- to C-terminus: Chorismate synthase (399 aa).

Residues 41–72 (IQKDLDRRKPGQSMITTSRGEPDKVTINSGIQ) form a disordered region. R48 is a binding site for NADP(+). Residues 125–127 (RSS), G288, 303–307 (HAPVS), and R330 contribute to the FMN site. 2 stretches are compositionally biased toward basic and acidic residues: residues 363–377 (PDRL…DTDY) and 389–399 (ADTHAKTIDDD). Residues 363-399 (PDRLDGRPGEYDTDYHPSSPQNDPEDADTHAKTIDDD) form a disordered region.

The protein belongs to the chorismate synthase family. FMNH2 serves as cofactor.

The enzyme catalyses 5-O-(1-carboxyvinyl)-3-phosphoshikimate = chorismate + phosphate. It participates in metabolic intermediate biosynthesis; chorismate biosynthesis; chorismate from D-erythrose 4-phosphate and phosphoenolpyruvate: step 7/7. Its function is as follows. Catalyzes the anti-1,4-elimination of the C-3 phosphate and the C-6 proR hydrogen from 5-enolpyruvylshikimate-3-phosphate (EPSP) to yield chorismate, which is the branch point compound that serves as the starting substrate for the three terminal pathways of aromatic amino acid biosynthesis. This reaction introduces a second double bond into the aromatic ring system. The sequence is that of Chorismate synthase from Haloarcula marismortui (strain ATCC 43049 / DSM 3752 / JCM 8966 / VKM B-1809) (Halobacterium marismortui).